The chain runs to 294 residues: MLTFSDMLLKLQQFWAEQGCNIVQPYDIPAGAGTFHPATLLRSLDSKPWAAAYVAPSRRPTDGRYGENPNRLGAYYQFQALIKPSPDNIQELYLKSLEYLGLNLKEHDIRFVEDNWESPTLGAWGLGWEVWLDGMEVTQFTYFQQVGGIACDPVAVEITYGTERLAMYLQGVESVFDIVWNRNGDEVTTYADVHKESEYEFSKYHFEVATVEKLFQHFEDASNECKLCLEVGLPLPAYDQCMIASHAFNVLDARKAISQAQRQNYILKVRELSIGCAQLYKAQEEERNQRVRGT.

It belongs to the class-II aminoacyl-tRNA synthetase family. Tetramer of two alpha and two beta subunits.

It is found in the cytoplasm. It catalyses the reaction tRNA(Gly) + glycine + ATP = glycyl-tRNA(Gly) + AMP + diphosphate. The polypeptide is Glycine--tRNA ligase alpha subunit (Sulfurovum sp. (strain NBC37-1)).